A 357-amino-acid chain; its full sequence is Peptide chain release factor 1 (357 aa).

Residue Q233 is modified to N5-methylglutamine.

It belongs to the prokaryotic/mitochondrial release factor family. Post-translationally, methylated by PrmC. Methylation increases the termination efficiency of RF1.

The protein resides in the cytoplasm. In terms of biological role, peptide chain release factor 1 directs the termination of translation in response to the peptide chain termination codons UAG and UAA. The polypeptide is Peptide chain release factor 1 (Leuconostoc citreum (strain KM20)).